A 154-amino-acid chain; its full sequence is Low molecular weight protein-tyrosine-phosphatase PtpA (154 aa).

The active-site Nucleophile is the cysteine 8. The active site involves arginine 14. The active-site Proton donor is the aspartate 120.

The protein belongs to the low molecular weight phosphotyrosine protein phosphatase family. As to quaternary structure, interacts with host CORO1A. Phosphorylations at Tyr-122 and Tyr-123 are essential for phosphatase activity.

Its subcellular location is the secreted. It catalyses the reaction O-phospho-L-tyrosyl-[protein] + H2O = L-tyrosyl-[protein] + phosphate. Functionally, secreted tyrosine phosphatase that plays a critical role during infection as a bacterial effector protein that counteracts host defenses. Required for intramacrophage survival. This Staphylococcus aureus (strain MSSA476) protein is Low molecular weight protein-tyrosine-phosphatase PtpA (ptpA).